Consider the following 84-residue polypeptide: U8-theraphotoxin-Hhn1a (84 aa).

The N-terminal stretch at 1–21 is a signal peptide; the sequence is MKVVLLECLVWMMAMMELVSC. 5 disulfides stabilise this stretch: cysteine 23-cysteine 35, cysteine 29-cysteine 44, cysteine 34-cysteine 67, cysteine 54-cysteine 75, and cysteine 69-cysteine 81.

This sequence belongs to the AVIT (prokineticin) family. In terms of tissue distribution, expressed by the venom gland.

It is found in the secreted. This chain is U8-theraphotoxin-Hhn1a, found in Cyriopagopus hainanus (Chinese bird spider).